The following is a 1068-amino-acid chain: Phosphatidylinositol 4,5-bisphosphate 3-kinase catalytic subunit alpha isoform (1068 aa).

The 90-residue stretch at 16–105 (MPPRILVECL…QPFLKVIEPV (90 aa)) folds into the PI3K-ABD domain. One can recognise a PI3K-RBD domain in the interval 187–289 (KGQIIVVIWV…GRMPNLMLMA (103 aa)). Residues 330–487 (INSALRIKIL…DWFSSVVKFP (158 aa)) enclose the C2 PI3K-type domain. Positions 517 to 694 (LARDNELREN…GLLLESYCRA (178 aa)) constitute a PIK helical domain. One can recognise a PI3K/PI4K catalytic domain in the interval 765-1051 (RLEECRIMSS…QMNDAHHGGW (287 aa)). A G-loop region spans residues 771–777 (IMSSAKR). A catalytic loop region spans residues 912-920 (GIGDRHNSN). The tract at residues 931 to 957 (HIDFGHFLDHKKKKFGYKRERVPFVLT) is activation loop.

It belongs to the PI3/PI4-kinase family. In terms of assembly, heterodimer of a catalytic subunit PIK3CA and a p85 regulatory subunit (PIK3R1, PIK3R2 or PIK3R3). Interacts with IRS1 in nuclear extracts. Interacts with RUFY3. Interacts with RASD2. Interacts with APPL1. Interacts with HRAS and KRAS. Interaction with HRAS/KRAS is required for PI3K pathway signaling and cell proliferation stimulated by EGF and FGF2. Interacts with FAM83B; activates the PI3K/AKT signaling cascade.

It carries out the reaction a 1,2-diacyl-sn-glycero-3-phospho-(1D-myo-inositol-4,5-bisphosphate) + ATP = a 1,2-diacyl-sn-glycero-3-phospho-(1D-myo-inositol-3,4,5-trisphosphate) + ADP + H(+). The catalysed reaction is a 1,2-diacyl-sn-glycero-3-phospho-(1D-myo-inositol) + ATP = a 1,2-diacyl-sn-glycero-3-phospho-(1D-myo-inositol-3-phosphate) + ADP + H(+). The enzyme catalyses L-seryl-[protein] + ATP = O-phospho-L-seryl-[protein] + ADP + H(+). It catalyses the reaction 1,2-dioctanoyl-sn-glycero-3-phospho-(1D-myo-inositol-4,5-bisphosphate) + ATP = 1,2-dioctanoyl-sn-glycero-3-phospho-(1D-myo-inositol-3,4,5-trisphosphate) + ADP + H(+). It carries out the reaction 1-octadecanoyl-2-(5Z,8Z,11Z,14Z)-eicosatetraenoyl-sn-glycero-3-phospho-1D-myo-inositol 4,5-bisphosphate + ATP = 1-octadecanoyl-2-(5Z,8Z,11Z,14Z-eicosatetraenoyl)-sn-glycero-3-phospho-(1D-myo-inositol 3,4,5-triphosphate) + ADP + H(+). Its pathway is phospholipid metabolism; phosphatidylinositol phosphate biosynthesis. Phosphoinositide-3-kinase (PI3K) phosphorylates phosphatidylinositol (PI) and its phosphorylated derivatives at position 3 of the inositol ring to produce 3-phosphoinositides. Uses ATP and PtdIns(4,5)P2 (phosphatidylinositol 4,5-bisphosphate) to generate phosphatidylinositol 3,4,5-trisphosphate (PIP3). PIP3 plays a key role by recruiting PH domain-containing proteins to the membrane, including AKT1 and PDPK1, activating signaling cascades involved in cell growth, survival, proliferation, motility and morphology. Participates in cellular signaling in response to various growth factors. Involved in the activation of AKT1 upon stimulation by receptor tyrosine kinases ligands such as EGF, insulin, IGF1, VEGFA and PDGF. Involved in signaling via insulin-receptor substrate (IRS) proteins. Essential in endothelial cell migration during vascular development through VEGFA signaling, possibly by regulating RhoA activity. Required for lymphatic vasculature development, possibly by binding to RAS and by activation by EGF and FGF2, but not by PDGF. Regulates invadopodia formation through the PDPK1-AKT1 pathway. Participates in cardiomyogenesis in embryonic stem cells through a AKT1 pathway. Participates in vasculogenesis in embryonic stem cells through PDK1 and protein kinase C pathway. In addition to its lipid kinase activity, it displays a serine-protein kinase activity that results in the autophosphorylation of the p85alpha regulatory subunit as well as phosphorylation of other proteins such as 4EBP1, H-Ras, the IL-3 beta c receptor and possibly others. Plays a role in the positive regulation of phagocytosis and pinocytosis. The protein is Phosphatidylinositol 4,5-bisphosphate 3-kinase catalytic subunit alpha isoform (PIK3CA) of Homo sapiens (Human).